The following is a 399-amino-acid chain: Acetate kinase (399 aa).

Asn-10 is a binding site for Mg(2+). Lys-17 is an ATP binding site. Arg-91 lines the substrate pocket. The active-site Proton donor/acceptor is the Asp-148. ATP-binding positions include 208–212, 283–285, and 331–335; these read HLGNG, DCR, and GIGEN. Glu-385 is a binding site for Mg(2+).

It belongs to the acetokinase family. In terms of assembly, homodimer. Mg(2+) is required as a cofactor. The cofactor is Mn(2+).

Its subcellular location is the cytoplasm. It catalyses the reaction acetate + ATP = acetyl phosphate + ADP. It functions in the pathway metabolic intermediate biosynthesis; acetyl-CoA biosynthesis; acetyl-CoA from acetate: step 1/2. In terms of biological role, catalyzes the formation of acetyl phosphate from acetate and ATP. Can also catalyze the reverse reaction. The chain is Acetate kinase from Shewanella sp. (strain MR-4).